Reading from the N-terminus, the 274-residue chain is NADPH-dependent 7-cyano-7-deazaguanine reductase (274 aa).

Residue 80–82 (VES) coordinates substrate. Residue 82 to 83 (SK) coordinates NADPH. The active-site Thioimide intermediate is the cysteine 181. Aspartate 188 serves as the catalytic Proton donor. Substrate is bound at residue 220-221 (HE). 249-250 (RG) is a binding site for NADPH.

Belongs to the GTP cyclohydrolase I family. QueF type 2 subfamily. Homodimer.

The protein resides in the cytoplasm. It carries out the reaction 7-aminomethyl-7-carbaguanine + 2 NADP(+) = 7-cyano-7-deazaguanine + 2 NADPH + 3 H(+). It participates in tRNA modification; tRNA-queuosine biosynthesis. In terms of biological role, catalyzes the NADPH-dependent reduction of 7-cyano-7-deazaguanine (preQ0) to 7-aminomethyl-7-deazaguanine (preQ1). The polypeptide is NADPH-dependent 7-cyano-7-deazaguanine reductase (Burkholderia mallei (strain NCTC 10247)).